The chain runs to 487 residues: Protein Optix (487 aa).

The homeobox DNA-binding region spans 154-214 (WDGEQKTHCF…KNRRQRDRAA (61 aa)). Disordered stretches follow at residues 182-330 (NPTK…GAGP) and 443-463 (ASVGGGGGNQHHEPTTTGYHH). A compositionally biased stretch (polar residues) spans 255–277 (GTHSPVPSSLQLQHSPGSTSNGA). Residues 278-293 (NDREESLSVDDDKPRD) are compositionally biased toward basic and acidic residues. Over residues 294–312 (LSGSLPLPLSLPLPLASPT) the composition is skewed to low complexity. Over residues 321–330 (GYGGGAGAGP) the composition is skewed to gly residues.

Belongs to the SIX/Sine oculis homeobox family. As to expression, expressed during early development of the head. First expressed in a band around the anterior end of stage 5 blastoderm embryo, at 93% to 85% egg length. By gastrula stage, site of expression shifts to the dorsal-anterior region. At stage 12, expression is found in the clypeolabrum, the stomodaeum, and in ectoderm dorsal to the future supraesophageal ganglion.

The protein resides in the nucleus. Its function is as follows. May be involved in head or eye development; development of the clypeolabrum and several head sensory organs. The sequence is that of Protein Optix (Optix) from Drosophila melanogaster (Fruit fly).